A 274-amino-acid polypeptide reads, in one-letter code: 2,3,4,5-tetrahydropyridine-2,6-dicarboxylate N-succinyltransferase (274 aa).

Residues Arg106 and Asp143 each contribute to the substrate site.

This sequence belongs to the transferase hexapeptide repeat family. Homotrimer.

It localises to the cytoplasm. It carries out the reaction (S)-2,3,4,5-tetrahydrodipicolinate + succinyl-CoA + H2O = (S)-2-succinylamino-6-oxoheptanedioate + CoA. Its pathway is amino-acid biosynthesis; L-lysine biosynthesis via DAP pathway; LL-2,6-diaminopimelate from (S)-tetrahydrodipicolinate (succinylase route): step 1/3. This Rickettsia prowazekii (strain Madrid E) protein is 2,3,4,5-tetrahydropyridine-2,6-dicarboxylate N-succinyltransferase.